The following is a 178-amino-acid chain: Fatty-acid and retinol-binding protein 1 (178 aa).

The N-terminal stretch at 1–16 (MYHQLILMALIGVIMA) is a signal peptide. N-linked (GlcNAc...) asparagine glycans are attached at residues Asn-44 and Asn-75. Coiled-coil stretches lie at residues 67-89 (DAAL…ELRN) and 122-154 (QKLD…LKAT). A glycan (N-linked (GlcNAc...) asparagine) is linked at Asn-157.

It belongs to the fatty-acid and retinol-binding protein (FARBP) family. In terms of processing, N-glycosylated.

Its subcellular location is the secreted. Its function is as follows. Binds retinol and different fatty acids. This is Fatty-acid and retinol-binding protein 1 from Onchocerca ochengi (Filarial nematode worm).